The following is a 139-amino-acid chain: Histone H2A (139 aa).

The disordered stretch occupies residues 1–27 (MSGKGKAGKSGGKAGSETKSMSRSSKA). Serine 2 carries the N-acetylserine modification. An N6-acetyllysine mark is found at lysine 9 and lysine 13. The span at 17 to 27 (ETKSMSRSSKA) shows a compositional bias: polar residues. N5-methylglutamine is present on glutamine 110. The interval 119 to 139 (PELLPSKSSKGKKDEGVSQEL) is disordered. Positions 129-139 (GKKDEGVSQEL) are enriched in basic and acidic residues. Position 136 is a phosphoserine (serine 136). Positions 136–137 (SQ) match the [ST]-Q motif motif.

Belongs to the histone H2A family. The nucleosome is a histone octamer containing two molecules each of H2A, H2B, H3 and H4 assembled in one H3-H4 heterotetramer and two H2A-H2B heterodimers. The octamer wraps approximately 147 bp of DNA. Phosphorylated to form H2AS128ph (gamma-H2A) in response to DNA double-strand breaks (DSBs) generated by exogenous genotoxic agents and by stalled replication forks. Phosphorylation is dependent on the DNA damage checkpoint kinases MEC1/ATR and TEL1/ATM, spreads on either side of a detected DSB site and may mark the surrounding chromatin for recruitment of proteins required for DNA damage signaling and repair. Gamma-H2A is removed from the DNA prior to the strand invasion-primer extension step of the repair process and subsequently dephosphorylated. Dephosphorylation is necessary for efficient recovery from the DNA damage checkpoint. Post-translationally, acetylated by ESA1 to form H2AK4ac and H2AK7ac.

The protein resides in the nucleus. It localises to the chromosome. Core component of nucleosome which plays a central role in DNA double strand break (DSB) repair. Nucleosomes wrap and compact DNA into chromatin, limiting DNA accessibility to the cellular machineries which require DNA as a template. Histones thereby play a central role in transcription regulation, DNA repair, DNA replication and chromosomal stability. DNA accessibility is regulated via a complex set of post-translational modifications of histones, also called histone code, and nucleosome remodeling. The protein is Histone H2A of Agaricus bisporus (White button mushroom).